The following is a 453-amino-acid chain: Allantoinase (453 aa).

Zn(2+) is bound by residues H59, H61, K146, H186, H242, and D315. K146 bears the N6-carboxylysine mark.

This sequence belongs to the metallo-dependent hydrolases superfamily. Allantoinase family. Homotetramer. Zn(2+) is required as a cofactor. Carboxylation allows a single lysine to coordinate two zinc ions.

The enzyme catalyses (S)-allantoin + H2O = allantoate + H(+). The protein operates within nitrogen metabolism; (S)-allantoin degradation; allantoate from (S)-allantoin: step 1/1. Its function is as follows. Catalyzes the conversion of allantoin (5-ureidohydantoin) to allantoic acid by hydrolytic cleavage of the five-member hydantoin ring. This is Allantoinase from Escherichia coli O9:H4 (strain HS).